Here is a 95-residue protein sequence, read N- to C-terminus: Small ribosomal subunit protein uS17 (95 aa).

It belongs to the universal ribosomal protein uS17 family. As to quaternary structure, part of the 30S ribosomal subunit.

In terms of biological role, one of the primary rRNA binding proteins, it binds specifically to the 5'-end of 16S ribosomal RNA. This is Small ribosomal subunit protein uS17 from Phytoplasma australiense.